Consider the following 368-residue polypeptide: Endophilin-A2 (368 aa).

The segment at 1-21 (MSVAGLKKQFYKASQLVSEKV) is membrane-binding amphipathic helix. The BAR domain maps to 18-249 (SEKVGGAEGT…LKRRVREASS (232 aa)). The segment at 60-87 (PNPASRAKLTMLNTVSKIRGQVKNPGYP) is required for dimerization upon membrane association. Residues 180 to 250 (DEELRQALEK…KRRVREASSR (71 aa)) adopt a coiled-coil conformation. An interaction with ARC region spans residues 218–254 (LVDAQLDYHRQAVQILEELADKLKRRVREASSRPRRE). Residues 243–309 (RVREASSRPR…SKSMPPLDQP (67 aa)) are disordered. Basic and acidic residues predominate over residues 245–261 (REASSRPRREFKPRPQE). At Ser-288 the chain carries Phosphoserine. A Phosphothreonine modification is found at Thr-298. Positions 306 to 365 (LDQPSCKALYDFEPENDGELGFREGDLITLTNQIDENWYEGMLHGQSGFFPLSYVQVLVP) constitute an SH3 domain. Tyr-315 bears the Phosphotyrosine mark.

It belongs to the endophilin family. As to quaternary structure, interacts with ARC, SYNJ1 and DNM1. Interacts with PDCD6IP. Interacts with BIN2. In terms of tissue distribution, detected in brain and testis (at protein level). Ubiquitous.

The protein resides in the cytoplasm. The protein localises to the early endosome membrane. It localises to the cell projection. Its subcellular location is the podosome. Functionally, implicated in endocytosis. May recruit other proteins to membranes with high curvature. The sequence is that of Endophilin-A2 (Sh3gl1) from Rattus norvegicus (Rat).